The chain runs to 259 residues: tRNA-cytidine(32) 2-sulfurtransferase (259 aa).

The PP-loop motif signature appears at 37 to 42; it reads SGGKDS. [4Fe-4S] cluster is bound by residues cysteine 112, cysteine 115, and cysteine 202.

The protein belongs to the TtcA family. As to quaternary structure, homodimer. Mg(2+) is required as a cofactor. It depends on [4Fe-4S] cluster as a cofactor.

The protein resides in the cytoplasm. The catalysed reaction is cytidine(32) in tRNA + S-sulfanyl-L-cysteinyl-[cysteine desulfurase] + AH2 + ATP = 2-thiocytidine(32) in tRNA + L-cysteinyl-[cysteine desulfurase] + A + AMP + diphosphate + H(+). It participates in tRNA modification. In terms of biological role, catalyzes the ATP-dependent 2-thiolation of cytidine in position 32 of tRNA, to form 2-thiocytidine (s(2)C32). The sulfur atoms are provided by the cysteine/cysteine desulfurase (IscS) system. This chain is tRNA-cytidine(32) 2-sulfurtransferase, found in Syntrophotalea carbinolica (strain DSM 2380 / NBRC 103641 / GraBd1) (Pelobacter carbinolicus).